Consider the following 445-residue polypeptide: Trigger factor (445 aa).

The region spanning 162–247 (GDQITMDAVG…VKAVHTAEPT (86 aa)) is the PPIase FKBP-type domain.

This sequence belongs to the FKBP-type PPIase family. Tig subfamily.

It is found in the cytoplasm. It catalyses the reaction [protein]-peptidylproline (omega=180) = [protein]-peptidylproline (omega=0). Involved in protein export. Acts as a chaperone by maintaining the newly synthesized protein in an open conformation. Functions as a peptidyl-prolyl cis-trans isomerase. This Rickettsia bellii (strain OSU 85-389) protein is Trigger factor.